Here is a 445-residue protein sequence, read N- to C-terminus: 3-phosphoshikimate 1-carboxyvinyltransferase (445 aa).

Positions 21, 22, and 26 each coordinate 3-phosphoshikimate. A phosphoenolpyruvate-binding site is contributed by Lys-21. Phosphoenolpyruvate is bound by residues Gly-92 and Arg-120. 3-phosphoshikimate-binding residues include Ser-165, Gln-166, Asp-307, and Lys-334. Residue Gln-166 participates in phosphoenolpyruvate binding. The active-site Proton acceptor is the Asp-307. Phosphoenolpyruvate is bound by residues Arg-338, Arg-379, and Lys-405.

Belongs to the EPSP synthase family. As to quaternary structure, monomer.

The protein localises to the cytoplasm. The catalysed reaction is 3-phosphoshikimate + phosphoenolpyruvate = 5-O-(1-carboxyvinyl)-3-phosphoshikimate + phosphate. It participates in metabolic intermediate biosynthesis; chorismate biosynthesis; chorismate from D-erythrose 4-phosphate and phosphoenolpyruvate: step 6/7. Its function is as follows. Catalyzes the transfer of the enolpyruvyl moiety of phosphoenolpyruvate (PEP) to the 5-hydroxyl of shikimate-3-phosphate (S3P) to produce enolpyruvyl shikimate-3-phosphate and inorganic phosphate. This is 3-phosphoshikimate 1-carboxyvinyltransferase from Chlamydia abortus (strain DSM 27085 / S26/3) (Chlamydophila abortus).